We begin with the raw amino-acid sequence, 176 residues long: Peptide deformylase 1 (176 aa).

Cys-99 and His-141 together coordinate Fe cation. The active site involves Glu-142. A Fe cation-binding site is contributed by His-145.

This sequence belongs to the polypeptide deformylase family. It depends on Fe(2+) as a cofactor.

It catalyses the reaction N-terminal N-formyl-L-methionyl-[peptide] + H2O = N-terminal L-methionyl-[peptide] + formate. Removes the formyl group from the N-terminal Met of newly synthesized proteins. Requires at least a dipeptide for an efficient rate of reaction. N-terminal L-methionine is a prerequisite for activity but the enzyme has broad specificity at other positions. The polypeptide is Peptide deformylase 1 (Nitrosomonas europaea (strain ATCC 19718 / CIP 103999 / KCTC 2705 / NBRC 14298)).